Reading from the N-terminus, the 147-residue chain is Phosphoribosyl-AMP cyclohydrolase (147 aa).

Residue Asp-91 coordinates Mg(2+). Position 92 (Cys-92) interacts with Zn(2+). Asp-93 and Asp-95 together coordinate Mg(2+). Positions 108 and 115 each coordinate Zn(2+).

The protein belongs to the PRA-CH family. In terms of assembly, homodimer. It depends on Mg(2+) as a cofactor. Zn(2+) serves as cofactor.

It is found in the cytoplasm. The enzyme catalyses 1-(5-phospho-beta-D-ribosyl)-5'-AMP + H2O = 1-(5-phospho-beta-D-ribosyl)-5-[(5-phospho-beta-D-ribosylamino)methylideneamino]imidazole-4-carboxamide. It participates in amino-acid biosynthesis; L-histidine biosynthesis; L-histidine from 5-phospho-alpha-D-ribose 1-diphosphate: step 3/9. Functionally, catalyzes the hydrolysis of the adenine ring of phosphoribosyl-AMP. The protein is Phosphoribosyl-AMP cyclohydrolase of Rhodopseudomonas palustris (strain BisB5).